Reading from the N-terminus, the 22-residue chain is Mu-conotoxin SxIIIA (22 aa).

Disulfide bonds link C2–C15, C3–C20, and C10–C21. A22 is modified (alanine amide).

It belongs to the conotoxin M superfamily. Expressed by the venom duct.

It is found in the secreted. Its function is as follows. Mu-conotoxins block voltage-gated sodium channels (Nav). This synthetic toxin potently blocks rNav1.4/SCN4A (IC(50)= 7 nM). It also moderately blocks rNav1.1/SCN1A (IC(50)=370 nM), rNav1.2/SCN2A (IC(50)=1 uM), and mNav1.6/SCN6A (IC(50)=570 nM). It is noteworthy that coexpression of subunits beta-2 or beta-4 (but not beta-1 or beta-3) decrease by more that 10-fold the binding potency of the toxin to rNav1.6. It is also noteworthy that the toxin is 50-fold more potent on mouse Nav1.6 than on rat Nav1.6. In vivo, when injected intraperitoneally or subcutaneously in mice, causes motor impairment, paralysis and death. This Conus striolatus (Cone snail) protein is Mu-conotoxin SxIIIA.